A 218-amino-acid chain; its full sequence is Octanoyltransferase (218 aa).

Residues 32–214 (ALTPDEIWLV…HFTQLLGYND (183 aa)) form the BPL/LPL catalytic domain. Substrate is bound by residues 71-78 (RGGQITYH), 143-145 (SLG), and 156-158 (GLA). Cys-174 functions as the Acyl-thioester intermediate in the catalytic mechanism.

Belongs to the LipB family.

The protein localises to the cytoplasm. The catalysed reaction is octanoyl-[ACP] + L-lysyl-[protein] = N(6)-octanoyl-L-lysyl-[protein] + holo-[ACP] + H(+). It participates in protein modification; protein lipoylation via endogenous pathway; protein N(6)-(lipoyl)lysine from octanoyl-[acyl-carrier-protein]: step 1/2. Its function is as follows. Catalyzes the transfer of endogenously produced octanoic acid from octanoyl-acyl-carrier-protein onto the lipoyl domains of lipoate-dependent enzymes. Lipoyl-ACP can also act as a substrate although octanoyl-ACP is likely to be the physiological substrate. The sequence is that of Octanoyltransferase from Histophilus somni (strain 129Pt) (Haemophilus somnus).